The primary structure comprises 112 residues: Protein Churchill (112 aa).

Zn(2+) is bound by residues cysteine 2, cysteine 5, cysteine 30, cysteine 33, histidine 59, cysteine 61, cysteine 64, histidine 66, histidine 71, cysteine 88, and cysteine 91.

It belongs to the Churchill family.

Functionally, transcriptional activator that mediates FGF signaling during neural development. Plays a role in the regulation of cell movement. Its function is as follows. Does not bind DNA by itself. The protein is Protein Churchill (CHURC1) of Homo sapiens (Human).